Here is a 37-residue protein sequence, read N- to C-terminus: Large ribosomal subunit protein bL36c (37 aa).

It belongs to the bacterial ribosomal protein bL36 family.

The protein localises to the plastid. The protein resides in the chloroplast. The polypeptide is Large ribosomal subunit protein bL36c (Angiopteris evecta (Mule's foot fern)).